Here is a 359-residue protein sequence, read N- to C-terminus: Protein Wnt-9b (359 aa).

An N-terminal signal peptide occupies residues 1–23 (MRPAPALALAALCLLVLPAAAAA). 11 cysteine pairs are disulfide-bonded: Cys91/Cys102, Cys137/Cys145, Cys147/Cys164, Cys212/Cys226, Cys214/Cys221, Cys293/Cys318, Cys307/Cys313, Cys317/Cys357, Cys333/Cys348, Cys335/Cys345, and Cys340/Cys341. The N-linked (GlcNAc...) asparagine glycan is linked to Asn101. Ser218 carries O-palmitoleoyl serine; by PORCN lipidation.

This sequence belongs to the Wnt family. In terms of assembly, forms a soluble 1:1 complex with AFM; this prevents oligomerization and is required for prolonged biological activity. The complex with AFM may represent the physiological form in body fluids. Component of the Wnt-Fzd-LRP5-LRP6 signaling complex that contains a WNT protein, a FZD protein and LRP5 or LRP6. Interacts directly in the complex with LRP6. Interacts with PKD1 (via extracellular domain). Palmitoleoylation is required for efficient binding to frizzled receptors. Depalmitoleoylation leads to Wnt signaling pathway inhibition.

Its subcellular location is the secreted. It is found in the extracellular space. The protein localises to the extracellular matrix. Ligand for members of the frizzled family of seven transmembrane receptors. Functions in the canonical Wnt/beta-catenin signaling pathway. Required for normal embryonic kidney development, and for normal development of the urogenital tract, including uterus and part of the oviduct and the upper vagina in females, and epididymis and vas deferens in males. Activates a signaling cascade in the metanephric mesenchyme that induces tubulogenesis. Acts upstream of WNT4 in the signaling pathways that mediate development of kidney tubules and the Muellerian ducts. Plays a role in cranofacial development and is required for normal fusion of the palate during embryonic development. The polypeptide is Protein Wnt-9b (Wnt9b) (Mus musculus (Mouse)).